Consider the following 278-residue polypeptide: Large ribosomal subunit protein uL2 (278 aa).

Residues 222–278 (GVVMNPVDHPHGGGEGRTSGGRHPVTPWGKPTKGAKTRKNKSTDKFIIRSRHERKKR) are disordered. Residues 269-278 (IRSRHERKKR) are compositionally biased toward basic residues.

Belongs to the universal ribosomal protein uL2 family. As to quaternary structure, part of the 50S ribosomal subunit. Forms a bridge to the 30S subunit in the 70S ribosome.

In terms of biological role, one of the primary rRNA binding proteins. Required for association of the 30S and 50S subunits to form the 70S ribosome, for tRNA binding and peptide bond formation. It has been suggested to have peptidyltransferase activity; this is somewhat controversial. Makes several contacts with the 16S rRNA in the 70S ribosome. This is Large ribosomal subunit protein uL2 from Maricaulis maris (strain MCS10) (Caulobacter maris).